The sequence spans 353 residues: Uroporphyrinogen decarboxylase (353 aa).

Residues Arg-27–Arg-31, Phe-46, Asp-76, Tyr-152, Ser-207, and His-321 contribute to the substrate site.

This sequence belongs to the uroporphyrinogen decarboxylase family. In terms of assembly, homodimer.

It is found in the cytoplasm. It catalyses the reaction uroporphyrinogen III + 4 H(+) = coproporphyrinogen III + 4 CO2. Its pathway is porphyrin-containing compound metabolism; protoporphyrin-IX biosynthesis; coproporphyrinogen-III from 5-aminolevulinate: step 4/4. Functionally, catalyzes the decarboxylation of four acetate groups of uroporphyrinogen-III to yield coproporphyrinogen-III. This Listeria monocytogenes serotype 4b (strain CLIP80459) protein is Uroporphyrinogen decarboxylase.